Here is a 189-residue protein sequence, read N- to C-terminus: Phosphoheptose isomerase (189 aa).

In terms of domain architecture, SIS spans 34-189 (AVETLKNGNK…CQIIDNELSH (156 aa)). 49 to 51 (NGG) provides a ligand contact to substrate. 2 residues coordinate Zn(2+): His58 and Glu62. Residues Glu62, 91-92 (ND), 117-119 (STS), Ser122, and Gln169 each bind substrate. Zn(2+) is bound by residues Gln169 and His177.

Belongs to the SIS family. GmhA subfamily. Homotetramer. Requires Zn(2+) as cofactor.

Its subcellular location is the cytoplasm. The enzyme catalyses 2 D-sedoheptulose 7-phosphate = D-glycero-alpha-D-manno-heptose 7-phosphate + D-glycero-beta-D-manno-heptose 7-phosphate. The protein operates within carbohydrate biosynthesis; D-glycero-D-manno-heptose 7-phosphate biosynthesis; D-glycero-alpha-D-manno-heptose 7-phosphate and D-glycero-beta-D-manno-heptose 7-phosphate from sedoheptulose 7-phosphate: step 1/1. Its function is as follows. Catalyzes the isomerization of sedoheptulose 7-phosphate in D-glycero-D-manno-heptose 7-phosphate. This chain is Phosphoheptose isomerase, found in Aliarcobacter butzleri (strain RM4018) (Arcobacter butzleri).